Here is an 899-residue protein sequence, read N- to C-terminus: Tubulin glycylase 3F (899 aa).

A TTL domain is found at 471–835 (FKDVIQIIKN…TEYYQIQNWK (365 aa)). ATP contacts are provided by residues 642–645 (QKYI), lysine 663, and aspartate 665.

It localises to the cytoplasm. The protein resides in the cytoskeleton. The protein localises to the cilium basal body. In terms of biological role, probable glycylase which modifies tubulin, generating side chains of glycine on the gamma-carboxyl groups of specific glutamate residues within the C-terminal tail of tubulin. This chain is Tubulin glycylase 3F (TTLL3F), found in Tetrahymena thermophila (strain SB210).